Reading from the N-terminus, the 68-residue chain is Intracellular calcium channel modulator CCP-Ts (68 aa).

The first 23 residues, 1-23, serve as a signal peptide directing secretion; it reads MNPKLLIVIGLLLATGVCSFAKA. 3 disulfide bridges follow: cysteine 33–cysteine 47, cysteine 40–cysteine 53, and cysteine 46–cysteine 62.

This sequence belongs to the scorpion calcin-like family. In terms of tissue distribution, expressed by the venom gland. In intravenously injected mice, the labeled toxin has preference for heart, liver and lungs.

The protein resides in the secreted. Its subcellular location is the nucleus. Its function is as follows. Cell penetrating peptide (CPP) that increases intracellular calcium release through the activation of nuclear inositol 1,4,5-trisphosphate receptors (ITPR) of cardiomyocytes, thereby causing an increase in the contraction frequency of these cells. In vivo, this toxin is not lethal to mice, hovewer anti-CPP serum reduces venom lethality, suggesting that this toxin is lethal when it acts in synergy with other venom components. This is Intracellular calcium channel modulator CCP-Ts from Tityus serrulatus (Brazilian scorpion).